The following is a 446-amino-acid chain: Tubulin beta chain (446 aa).

Residues glutamine 11, glutamate 69, serine 138, glycine 142, threonine 143, glycine 144, asparagine 204, and asparagine 226 each contribute to the GTP site. Glutamate 69 is a binding site for Mg(2+). Positions tyrosine 422–glutamate 446 are disordered. Acidic residues predominate over residues glycine 429–glutamate 446.

This sequence belongs to the tubulin family. In terms of assembly, dimer of alpha and beta chains. A typical microtubule is a hollow water-filled tube with an outer diameter of 25 nm and an inner diameter of 15 nM. Alpha-beta heterodimers associate head-to-tail to form protofilaments running lengthwise along the microtubule wall with the beta-tubulin subunit facing the microtubule plus end conferring a structural polarity. Microtubules usually have 13 protofilaments but different protofilament numbers can be found in some organisms and specialized cells. Mg(2+) is required as a cofactor.

It localises to the cytoplasm. It is found in the cytoskeleton. Tubulin is the major constituent of microtubules, a cylinder consisting of laterally associated linear protofilaments composed of alpha- and beta-tubulin heterodimers. Microtubules grow by the addition of GTP-tubulin dimers to the microtubule end, where a stabilizing cap forms. Below the cap, tubulin dimers are in GDP-bound state, owing to GTPase activity of alpha-tubulin. This is Tubulin beta chain (TUB2) from Gibberella zeae (strain ATCC MYA-4620 / CBS 123657 / FGSC 9075 / NRRL 31084 / PH-1) (Wheat head blight fungus).